Reading from the N-terminus, the 242-residue chain is Guanylate kinase (242 aa).

A Guanylate kinase-like domain is found at 22–200; that stretch reads GLLIVMTGAS…AVRELQAVQR (179 aa). 29 to 36 is a binding site for ATP; that stretch reads GASGVGKG.

The protein belongs to the guanylate kinase family.

Its subcellular location is the cytoplasm. It catalyses the reaction GMP + ATP = GDP + ADP. Functionally, essential for recycling GMP and indirectly, cGMP. The polypeptide is Guanylate kinase (Deinococcus geothermalis (strain DSM 11300 / CIP 105573 / AG-3a)).